The chain runs to 243 residues: MIKLTAQQIFDKLLDEEKILSANGQIRFFLGDVDIIVKQKDVVGNIIQEWLGGWLRKREIEFDVSTNTQMPPDFFLNKKDRSRELLEVKAFNRNASPGFDIADFKMYSDEIIHKPYMLDVDYLIFGYDMDDNGNVTIKDLWLKKVWQITRSMDGWAINLQVKKGVVHKIRPGVWYSINKKNMPMFECLEDFVSAIEETVYQNPATRHNASLWKRKFEEAYKKHYNRSISIPRWHEIAHKYKKK.

The catalysed reaction is Endonucleolytic cleavage of DNA to give specific double-stranded fragments with terminal 5'-phosphates.. A P subtype restriction enzyme that recognizes the double-stranded sequence 5'-GGNNCC-3' and cleaves after N-3. This chain is Type II restriction enzyme NlaIV (nlaIVR), found in Neisseria lactamica.